The primary structure comprises 453 residues: MYKTKCLREKLVLFLKIFFPILIYQFANYSASFVDTAMTGQYNTMDLAGVSMATSIWNPFFTFLTGIVSALVPIIGHHLGRGKKEEVASDFYQFIYLALGLSVVLLGMVLFLAPTILNHIGLEAAVAAVAVRYLWFLSIGIIPLLLFSVIRSLLDSLGLTKLSMYLMLLLLPLNSGFNYLLIYGAFGVPELGGAGAGLGTSLAYWVLLGISVLVLFKQEKLKALHLEKRILLNMDKIKEGVRLGLPIGGTVFAEVAVFSVVGLIMAKFSSLIIASHQSAMNFSSLMYAFPMSISSAMAIVVSYEVGAKRFDDAKTYIGLGRWTALIFAAFTLTFLYIFRGNVASLYGNDPKFIDLTARFLTYSLFFQLADTFAAPLQGILRGYKDTVIPFYLGLLGYWGVAIPVATLFDSLTDFGAYSYWIGLIISLIVSGALYRWRLTVIMKRFESLAKSKR.

12 helical membrane-spanning segments follow: residues 12–34, 54–76, 96–118, 128–150, 162–184, 194–216, 243–265, 285–307, 319–338, 358–380, 387–406, and 416–438; these read VLFL…ASFV, TSIW…PIIG, YLAL…TILN, AVAV…FSVI, LSMY…LIYG, AGAG…LVLF, LGLP…GLIM, LMYA…EVGA, LGRW…LYIF, RFLT…QGIL, VIPF…PVAT, and AYSY…RWRL.

The protein belongs to the multi antimicrobial extrusion (MATE) (TC 2.A.66.1) family.

The protein resides in the cell membrane. Its function is as follows. Multidrug efflux pump. In Streptococcus pneumoniae (strain ATCC BAA-255 / R6), this protein is Probable multidrug resistance protein NorM (norM).